Reading from the N-terminus, the 441-residue chain is ATP-dependent protease ATPase subunit HslU (441 aa).

ATP-binding positions include Ile-18, 60–65 (GVGKTE), Asp-254, Glu-319, and Arg-391.

This sequence belongs to the ClpX chaperone family. HslU subfamily. A double ring-shaped homohexamer of HslV is capped on each side by a ring-shaped HslU homohexamer. The assembly of the HslU/HslV complex is dependent on binding of ATP.

It is found in the cytoplasm. Functionally, ATPase subunit of a proteasome-like degradation complex; this subunit has chaperone activity. The binding of ATP and its subsequent hydrolysis by HslU are essential for unfolding of protein substrates subsequently hydrolyzed by HslV. HslU recognizes the N-terminal part of its protein substrates and unfolds these before they are guided to HslV for hydrolysis. This is ATP-dependent protease ATPase subunit HslU from Shewanella pealeana (strain ATCC 700345 / ANG-SQ1).